Here is a 439-residue protein sequence, read N- to C-terminus: Damage-control phosphatase ARMT1 (439 aa).

The residue at position 2 (alanine 2) is an N-acetylalanine. A Phosphoserine modification is found at serine 4. The residue at position 40 (lysine 40) is an N6-acetyllysine. The Mn(2+) site is built by aspartate 251 and asparagine 252. Residue 251-252 (DN) participates in substrate binding. S-adenosyl-L-methionine contacts are provided by glutamate 256 and aspartate 289. Residue aspartate 289 coordinates Mn(2+). Substrate-binding positions include 365 to 369 (DLNYR) and lysine 402. A Subfamily III RTxK motif motif is present at residues 399-402 (RTLK).

The protein belongs to the damage-control phosphatase family. Sugar phosphate phosphatase III subfamily. Requires Mn(2+) as cofactor. Ni(2+) serves as cofactor. Post-translationally, automethylated.

The enzyme catalyses beta-D-fructose 1-phosphate + H2O = D-fructose + phosphate. It carries out the reaction beta-D-fructose 6-phosphate = dihydroxyacetone + D-glyceraldehyde 3-phosphate. It catalyses the reaction L-glutamyl-[protein] + S-adenosyl-L-methionine = [protein]-L-glutamate 5-O-methyl ester + S-adenosyl-L-homocysteine. Metal-dependent phosphatase that shows phosphatase activity against several substrates, including fructose-1-phosphate and fructose-6-phosphate. Its preference for fructose-1-phosphate, a strong glycating agent that causes DNA damage rather than a canonical yeast metabolite, suggests a damage-control function in hexose phosphate metabolism. Has also been shown to have O-methyltransferase activity that methylates glutamate residues of target proteins to form gamma-glutamyl methyl ester residues. Possibly methylates PCNA, suggesting it is involved in the DNA damage response. This chain is Damage-control phosphatase ARMT1, found in Mus musculus (Mouse).